A 1043-amino-acid chain; its full sequence is Phosphatidylinositol 4,5-bisphosphate 3-kinase catalytic subunit delta isoform (1043 aa).

The PI3K-ABD domain occupies 16-105; sequence ESQSVVVDFL…LPVLRLVARE (90 aa). Residues 187–278 form the PI3K-RBD domain; the sequence is NRALLVNVKF…GLTPHLTMVH (92 aa). The tract at residues 287–312 is disordered; that stretch reads DEQSNPAPQVQKPRAKPPPIPAKKPS. The region spanning 319–476 is the C2 PI3K-type domain; sequence LEQPFSIELI…SAAALVIYLP (158 aa). The 178-residue stretch at 496–673 folds into the PIK helical domain; the sequence is RHGERGRITE…GLIMEAYCRG (178 aa). Y523 carries the phosphotyrosine modification. Residues 744 to 1026 enclose the PI3K/PI4K catalytic domain; the sequence is CVEQCTFMDS…KFNEALRESW (283 aa). The G-loop stretch occupies residues 750–756; it reads FMDSKMK. The segment at 889–897 is catalytic loop; that stretch reads GIGDRHSDN. An activation loop region spans residues 908–934; that stretch reads HIDFGHFLGNFKTKFGINRERVPFILT. At S1038 the chain carries Phosphoserine; by autocatalysis.

Belongs to the PI3/PI4-kinase family. Heterodimer of a catalytic subunit PIK3CD and a p85 regulatory subunit (PIK3R1, PIK3R2 or PIK3R3). Interacts with ERAS and HRAS. Post-translationally, autophosphorylation on Ser-1038 results in the almost complete inactivation of the lipid kinase activity. As to expression, abundantly expressed in adult mouse spleen as well as in testis. Isoform 1 is expressed in spleen and lung (at protein level). Isoform 1 is expressed predominantly in leukocytes.

Its subcellular location is the cytoplasm. It catalyses the reaction a 1,2-diacyl-sn-glycero-3-phospho-(1D-myo-inositol-4,5-bisphosphate) + ATP = a 1,2-diacyl-sn-glycero-3-phospho-(1D-myo-inositol-3,4,5-trisphosphate) + ADP + H(+). It carries out the reaction a 1,2-diacyl-sn-glycero-3-phospho-(1D-myo-inositol) + ATP = a 1,2-diacyl-sn-glycero-3-phospho-(1D-myo-inositol-3-phosphate) + ADP + H(+). The catalysed reaction is 1-octadecanoyl-2-(5Z,8Z,11Z,14Z)-eicosatetraenoyl-sn-glycero-3-phospho-1D-myo-inositol 4,5-bisphosphate + ATP = 1-octadecanoyl-2-(5Z,8Z,11Z,14Z-eicosatetraenoyl)-sn-glycero-3-phospho-(1D-myo-inositol 3,4,5-triphosphate) + ADP + H(+). It participates in phospholipid metabolism; phosphatidylinositol phosphate biosynthesis. Activated by growth factors and cytokine receptors through a tyrosine-kinase-dependent mechanism. Activated by RAS. IC87114 inhibits lipid kinase activity and is selective in cells at doses up to 5-10 uM. Among other effects, IC87114 reduces allergic responses, prevents the recruitment of antigen-specific T cells into target tissue, and affects natural killer cell chemotaxis. Functionally, phosphoinositide-3-kinase (PI3K) phosphorylates phosphatidylinositol (PI) and its phosphorylated derivatives at position 3 of the inositol ring to produce 3-phosphoinositides. Uses ATP and PtdIns(4,5)P2 (phosphatidylinositol 4,5-bisphosphate) to generate phosphatidylinositol 3,4,5-trisphosphate (PIP3). PIP3 plays a key role by recruiting PH domain-containing proteins to the membrane, including AKT1 and PDPK1, activating signaling cascades involved in cell growth, survival, proliferation, motility and morphology. Mediates immune responses. Plays a role in B-cell development, proliferation, migration, and function. Required for B-cell receptor (BCR) signaling. Mediates B-cell proliferation response to anti-IgM, anti-CD40 and IL4 stimulation. Promotes cytokine production in response to TLR4 and TLR9. Required for antibody class switch mediated by TLR9. Involved in the antigen presentation function of B-cells. Involved in B-cell chemotaxis in response to CXCL13 and sphingosine 1-phosphate (S1P). Required for proliferation, signaling and cytokine production of naive, effector and memory T-cells. Required for T-cell receptor (TCR) signaling. Mediates TCR signaling events at the immune synapse. Activation by TCR leads to antigen-dependent memory T-cell migration and retention to antigenic tissues. Together with PIK3CG participates in T-cell development. Contributes to T-helper cell expansion and differentiation. Required for T-cell migration mediated by homing receptors SELL/CD62L, CCR7 and S1PR1 and antigen dependent recruitment of T-cells. Together with PIK3CG is involved in natural killer (NK) cell development and migration towards the sites of inflammation. Participates in NK cell receptor activation. Plays a role in NK cell maturation and cytokine production. Together with PIK3CG is involved in neutrophil chemotaxis and extravasation. Together with PIK3CG participates in neutrophil respiratory burst. Plays important roles in mast-cell development and mast cell mediated allergic response. Involved in stem cell factor (SCF)-mediated proliferation, adhesion and migration. Required for allergen-IgE-induced degranulation and cytokine release. The lipid kinase activity is required for its biological function. This is Phosphatidylinositol 4,5-bisphosphate 3-kinase catalytic subunit delta isoform (Pik3cd) from Mus musculus (Mouse).